The following is a 160-amino-acid chain: Mediator of RNA polymerase II transcription subunit 31 (160 aa).

The disordered stretch occupies residues 124–160 (GTGIENEQGGTEANNPGEAEGEQTKGTADQQDGSSKT). The segment covering 147-160 (TKGTADQQDGSSKT) has biased composition (polar residues).

The protein belongs to the Mediator complex subunit 31 family. As to quaternary structure, component of the Mediator complex.

The protein resides in the nucleus. In terms of biological role, component of the Mediator complex, a coactivator involved in the regulated transcription of nearly all RNA polymerase II-dependent genes. Mediator functions as a bridge to convey information from gene-specific regulatory proteins to the basal RNA polymerase II transcription machinery. Mediator is recruited to promoters by direct interactions with regulatory proteins and serves as a scaffold for the assembly of a functional preinitiation complex with RNA polymerase II and the general transcription factors. This chain is Mediator of RNA polymerase II transcription subunit 31 (soh1), found in Aspergillus terreus (strain NIH 2624 / FGSC A1156).